The chain runs to 252 residues: Probable 6-phosphogluconolactonase 5 (252 aa).

Belongs to the glucosamine/galactosamine-6-phosphate isomerase family. 6-phosphogluconolactonase subfamily.

The protein localises to the cytoplasm. It localises to the cytosol. The catalysed reaction is 6-phospho-D-glucono-1,5-lactone + H2O = 6-phospho-D-gluconate + H(+). It functions in the pathway carbohydrate degradation; pentose phosphate pathway; D-ribulose 5-phosphate from D-glucose 6-phosphate (oxidative stage): step 2/3. Catalyzes the hydrolysis of 6-phosphogluconolactone to 6-phosphogluconate. In Arabidopsis thaliana (Mouse-ear cress), this protein is Probable 6-phosphogluconolactonase 5.